Reading from the N-terminus, the 297-residue chain is MKHITDLYESVNSTMSNKSDCPPVVLPEEVFFTISVIGVLENLIVLLAVIKNKNLQSPMYFFICSLAISDMLGSLYKILENILIIFRNMGYLEPRGGFESTADDVVDSLFILSLLGSICSLSAIAADRYITIFHALQYQRLVTPRRAAVVLLIIWACCIGSGITIVTFSHHVPAVIAFTALFPLMLVFILCLYGHMFLLARSHARRVSTLPRANMKGAITLTVLLGVFIFCWAPFVLHILLMTFCPADPYCACYLALFQVNAVLIMCNAIIDPFIYAFRSPELRDAFKKMIICKRYP.

Over 1-23 (MKHITDLYESVNSTMSNKSDCPP) the chain is Extracellular. Asn12 and Asn17 each carry an N-linked (GlcNAc...) asparagine glycan. 2 disulfide bridges follow: Cys21-Cys253 and Cys245-Cys251. The helical transmembrane segment at 24-49 (VVLPEEVFFTISVIGVLENLIVLLAV) threads the bilayer. The Cytoplasmic portion of the chain corresponds to 50 to 58 (IKNKNLQSP). A helical transmembrane segment spans residues 59–79 (MYFFICSLAISDMLGSLYKIL). The Extracellular portion of the chain corresponds to 80–104 (ENILIIFRNMGYLEPRGGFESTADD). The helical transmembrane segment at 105–126 (VVDSLFILSLLGSICSLSAIAA) threads the bilayer. The Cytoplasmic segment spans residues 127–147 (DRYITIFHALQYQRLVTPRRA). Residues 148-168 (AVVLLIIWACCIGSGITIVTF) traverse the membrane as a helical segment. The Extracellular portion of the chain corresponds to 169–180 (SHHVPAVIAFTA). Residues 181–199 (LFPLMLVFILCLYGHMFLL) traverse the membrane as a helical segment. Over 200-217 (ARSHARRVSTLPRANMKG) the chain is Cytoplasmic. The helical transmembrane segment at 218-244 (AITLTVLLGVFIFCWAPFVLHILLMTF) threads the bilayer. The Extracellular segment spans residues 245-256 (CPADPYCACYLA). A helical transmembrane segment spans residues 257 to 278 (LFQVNAVLIMCNAIIDPFIYAF). Topologically, residues 279–297 (RSPELRDAFKKMIICKRYP) are cytoplasmic. A lipid anchor (S-palmitoyl cysteine) is attached at Cys293.

Belongs to the G-protein coupled receptor 1 family. Homodimer. Interacts with corticotropin (ACTH). Interacts with MRAP; this interaction targets MC2R to the plasma membrane. Interacts with MRAP2; competing with MRAP for binding to MC2R and impairing the binding of corticotropin (ACTH). In terms of processing, ubiquitinated by MGRN1 that may be involved in post-endocytic trafficking and/or degradation of internalized receptor. Expressed in skin and adrenal gland tissues.

The protein resides in the cell membrane. Its function is as follows. Hormone receptor primarily expressed in adrenal cortex that plays a key role in regulating adrenocortical function. Upon corticotropin (ACTH) binding, facilitates the release of adrenal glucocorticoids, including cortisol and corticosterone. In addition, MC2R is required for fetal and neonatal adrenal gland development. Mechanistically, activates adenylate cyclase (cAMP), the MAPK cascade as well as the cAMP-dependent protein kinase A pathway leading to steroidogenic factor 1/NR5A1-mediated transcriptional activation. This chain is Adrenocorticotropic hormone receptor (MC2R), found in Sus scrofa (Pig).